The following is a 177-amino-acid chain: MGRRKSQAAAERNLEPIKISTDSIKKRPRRDSNEPPFKKFDDLEMFETYLKGESWDNDFDFLHARLDYYPPFIRNEIHDDPEKIKPTMNNKSKKFVRNLHHHVDKHLLKQINDMVGIEYKFKREEEKLPDGRLIWRYKDESDHGFEGLDRKWTVEVDVECSPNDPTVVVDMRSIPID.

Residues 1–37 (MGRRKSQAAAERNLEPIKISTDSIKKRPRRDSNEPPF) are disordered.

Belongs to the RGI1 family.

It is found in the cell membrane. In terms of biological role, involved in the control of energetic metabolism and significantly contribute to cell fitness, especially under respiratory growth conditions. This Komagataella phaffii (strain GS115 / ATCC 20864) (Yeast) protein is Respiratory growth induced protein 1 (RGI1).